The following is a 427-amino-acid chain: MTEAMKITLSTQPADARWGEKATYSINNDGITLHLNGADDLGLIQRAARKIDGLGIKHVQLSGEGWDADRCWAFWQGYKAPKGTRKVVWPDLDDAQRQELDNRLMIIDWVRDTINAPAEELGPSQLAQRAVDLISNVAGDRVTYRITKGEDLREQGYMGLHTVGRGSERSPVLLALDYNPTGDKEAPVYACLVGKGITFDSGGYSIKQTAFMDSMKSDMGGAATVTGALAFAITRGLNKRVKLFLCCADNLISGNAFKLGDIITYRNGKKVEVMNTDAEGRLVLADGLIDASAQKPEMIIDAATLTGAAKTALGNDYHALFSFDDALAGRLLASAAQENEPFWRLPLAEFHRSQLPSNFAELNNTGSAAYPAGASTAAGFLSHFVENYQQGWLHIDCSATYRKAPVEQWSAGATGLGVRTIANLLTA.

Mn(2+) contacts are provided by Lys-195 and Asp-200. Lys-207 is an active-site residue. Mn(2+) is bound by residues Asp-218, Asp-277, and Glu-279. Arg-281 is an active-site residue.

Belongs to the peptidase M17 family. In terms of assembly, homohexamer. Mn(2+) is required as a cofactor.

The protein resides in the cytoplasm. It carries out the reaction Release of an N-terminal amino acid, Xaa, from a peptide or arylamide. Xaa is preferably Glu or Asp but may be other amino acids, including Leu, Met, His, Cys and Gln.. Functionally, probably plays an important role in intracellular peptide degradation. This Escherichia coli (strain K12 / MC4100 / BW2952) protein is Peptidase B.